A 411-amino-acid polypeptide reads, in one-letter code: Putative binding protein BRA0748/BS1330_II0741 (411 aa).

Positions 1–25 (MLIRKWKAGLLAGLSILALASSADA) are cleaved as a signal peptide.

Belongs to the bacterial solute-binding protein 1 family. In terms of assembly, the complex is composed of two ATP-binding proteins (BRA0745), two transmembrane proteins (BRA0749) and a solute-binding protein (BRA0748).

The protein localises to the periplasm. In terms of biological role, probably part of an ABC transporter complex. This is Putative binding protein BRA0748/BS1330_II0741 from Brucella suis biovar 1 (strain 1330).